Here is a 690-residue protein sequence, read N- to C-terminus: Protein SPT2 homolog (690 aa).

Residues 1–579 are important for interaction with DNA; sequence MDFHNILVMA…PGHRPVFRPQ (579 aa). The stretch at 40–82 forms a coiled coil; that stretch reads ESAAVQAFLRRKEEEKRKKELEEKRKKERLLAKRIELKHDRKA. Disordered stretches follow at residues 105-167 and 186-619; these read PKKR…APAP and EIKV…QEEI. The segment covering 186–228 has biased composition (basic and acidic residues); the sequence is EIKVVKKIEERPRTAEELREREYLERKNKRVETQKKKSEKEVK. A compositionally biased stretch (low complexity) spans 229 to 243; the sequence is SAGISSSSKKATSLK. Composition is skewed to basic and acidic residues over residues 244-259 and 271-285; these read ECAD…DKHA and TDKK…EKHS. Positions 369-380 are enriched in polar residues; it reads HETNSSAKRPSS. A compositionally biased stretch (gly residues) spans 383–396; the sequence is GKGGSGHPAGGSSA. Residues 397-442 are compositionally biased toward low complexity; the sequence is GPGRSSSNSGTGPGRPGSVSSPGPGRQGSSSAAGPGRPSSSSSLGP. Composition is skewed to gly residues over residues 443 to 457, 465 to 477, and 489 to 521; these read GRLG…GRPG, GRPG…GPGR, and LGSG…GPGR. The span at 545-565 shows a compositional bias: polar residues; sequence VSETISSKNLVTRPSNGQING. An important for interaction with histones region spans residues 580-690; sequence GIGRPPVGYK…KRQSKKLRTR (111 aa). Acidic residues predominate over residues 593-617; sequence DDDDDDDEYDSEMDDFIEDEGEPQE. Residues 650–690 are a coiled coil; sequence REQQKEEARSLRLGVQEDLEELRREEEELKRKRQSKKLRTR.

It belongs to the SPT2 family. Interacts with POLR1A. Interacts with histones. Interacts with a heterotetrameric complex formed by histone H3 and H4, especially when the histone tetramer is not bound to DNA.

The protein localises to the nucleus. The protein resides in the nucleolus. In terms of biological role, histone chaperone that stabilizes pre-existing histone tetramers and regulates replication-independent histone exchange on chromatin. Required for normal chromatin refolding in the coding region of transcribed genes, and for the suppression of spurious transcription. Binds DNA and histones and promotes nucleosome assembly (in vitro). Modulates RNA polymerase 1-mediated transcription. Required for optimal growth in the presence of the DNA damaging agents actinomycin D or mitomycin C (in vitro). Facilitates formation of tetrameric histone complexes containing histone H3 and H4. Modulates RNA polymerase 1-mediated transcription. Binds DNA, with a preference for branched DNA species, such as Y-form DNA and Holliday junction DNA. The protein is Protein SPT2 homolog (SPTY2D1) of Gallus gallus (Chicken).